The chain runs to 433 residues: tRNA(Ile)-lysidine synthase (433 aa).

37-42 (SGGKDS) is a binding site for ATP.

It belongs to the tRNA(Ile)-lysidine synthase family.

The protein localises to the cytoplasm. The enzyme catalyses cytidine(34) in tRNA(Ile2) + L-lysine + ATP = lysidine(34) in tRNA(Ile2) + AMP + diphosphate + H(+). Functionally, ligates lysine onto the cytidine present at position 34 of the AUA codon-specific tRNA(Ile) that contains the anticodon CAU, in an ATP-dependent manner. Cytidine is converted to lysidine, thus changing the amino acid specificity of the tRNA from methionine to isoleucine. This chain is tRNA(Ile)-lysidine synthase, found in Leptospira interrogans serogroup Icterohaemorrhagiae serovar copenhageni (strain Fiocruz L1-130).